Consider the following 86-residue polypeptide: Thioredoxin (86 aa).

Residues Cys-15 and Cys-18 each act as nucleophile in the active site. Cys-15 and Cys-18 are disulfide-bonded.

It belongs to the glutaredoxin family.

Its function is as follows. Does not function as a glutathione-disulfide oxidoreductase in the presence of glutathione and glutathione reductase. Has low thioredoxin activity in vitro. The chain is Thioredoxin from Methanocaldococcus jannaschii (strain ATCC 43067 / DSM 2661 / JAL-1 / JCM 10045 / NBRC 100440) (Methanococcus jannaschii).